The primary structure comprises 78 residues: MNPIVEFCLSNMAKGGDYVFNQLENDPDVDVLEYGCLTHCGICSAGLYALVNGDIVEGDSPEELLQNIYAHIKETWIF.

It belongs to the UPF0349 family.

This Staphylococcus aureus (strain Mu3 / ATCC 700698) protein is UPF0349 protein SAHV_0934.